The sequence spans 117 residues: NADH-ubiquinone oxidoreductase chain 3 (117 aa).

A run of 3 helical transmembrane segments spans residues 1–21, 58–78, and 86–106; these read MLML…VMML, FLIA…LPMI, and LMNW…GLYH.

It belongs to the complex I subunit 3 family.

It localises to the mitochondrion membrane. The enzyme catalyses a ubiquinone + NADH + 5 H(+)(in) = a ubiquinol + NAD(+) + 4 H(+)(out). Core subunit of the mitochondrial membrane respiratory chain NADH dehydrogenase (Complex I) that is believed to belong to the minimal assembly required for catalysis. Complex I functions in the transfer of electrons from NADH to the respiratory chain. The immediate electron acceptor for the enzyme is believed to be ubiquinone. The chain is NADH-ubiquinone oxidoreductase chain 3 (mt:ND3) from Anopheles gambiae (African malaria mosquito).